We begin with the raw amino-acid sequence, 516 residues long: Cytochrome P450 1A1 (516 aa).

The segment at 25–36 (FRPQVPKGLKSP) is mitochondrial targeting signal. The O-linked (GlcNAc) serine glycan is linked to Ser63. Position 220 (Phe220) interacts with substrate. Heme is bound at residue Cys453.

Belongs to the cytochrome P450 family. In terms of assembly, interacts with cytosolic chaperones HSP70 and HSP90; this interaction is required for initial targeting to mitochondria. Interacts (via mitochondrial targeting signal) with TOMM40 (via N-terminus); this interaction is required for translocation across the mitochondrial outer membrane. Requires heme as cofactor. Constitutively expressed in liver.

The protein localises to the endoplasmic reticulum membrane. The protein resides in the mitochondrion inner membrane. It localises to the microsome membrane. Its subcellular location is the cytoplasm. It carries out the reaction an organic molecule + reduced [NADPH--hemoprotein reductase] + O2 = an alcohol + oxidized [NADPH--hemoprotein reductase] + H2O + H(+). The catalysed reaction is estrone + reduced [NADPH--hemoprotein reductase] + O2 = 2-hydroxyestrone + oxidized [NADPH--hemoprotein reductase] + H2O + H(+). The enzyme catalyses estrone + reduced [NADPH--hemoprotein reductase] + O2 = 4-hydroxyestrone + oxidized [NADPH--hemoprotein reductase] + H2O + H(+). It catalyses the reaction estrone + reduced [NADPH--hemoprotein reductase] + O2 = 6alpha-hydroxyestrone + oxidized [NADPH--hemoprotein reductase] + H2O + H(+). It carries out the reaction estrone + reduced [NADPH--hemoprotein reductase] + O2 = 15alpha-hydroxyestrone + oxidized [NADPH--hemoprotein reductase] + H2O + H(+). The catalysed reaction is estrone + reduced [NADPH--hemoprotein reductase] + O2 = 16alpha-hydroxyestrone + oxidized [NADPH--hemoprotein reductase] + H2O + H(+). The enzyme catalyses 17beta-estradiol + reduced [NADPH--hemoprotein reductase] + O2 = 2-hydroxy-17beta-estradiol + oxidized [NADPH--hemoprotein reductase] + H2O + H(+). It catalyses the reaction 17beta-estradiol + reduced [NADPH--hemoprotein reductase] + O2 = 4-hydroxy-17beta-estradiol + oxidized [NADPH--hemoprotein reductase] + H2O + H(+). It carries out the reaction 17beta-estradiol + reduced [NADPH--hemoprotein reductase] + O2 = 6alpha-hydroxy-17beta-estradiol + oxidized [NADPH--hemoprotein reductase] + H2O + H(+). The catalysed reaction is 17beta-estradiol + reduced [NADPH--hemoprotein reductase] + O2 = 7alpha-hydroxy-17beta-estradiol + oxidized [NADPH--hemoprotein reductase] + H2O + H(+). The enzyme catalyses 17beta-estradiol + reduced [NADPH--hemoprotein reductase] + O2 = 15alpha-hydroxy-17beta-estradiol + oxidized [NADPH--hemoprotein reductase] + H2O + H(+). It catalyses the reaction (5Z,8Z,11Z)-eicosatrienoate + reduced [NADPH--hemoprotein reductase] + O2 = 19-hydroxy-(5Z,8Z,11Z)-eicosatrienoate + oxidized [NADPH--hemoprotein reductase] + H2O + H(+). It carries out the reaction (5Z,8Z,11Z,14Z)-eicosatetraenoate + reduced [NADPH--hemoprotein reductase] + O2 = 16-hydroxy-(5Z,8Z,11Z,14Z)-eicosatetraenoate + oxidized [NADPH--hemoprotein reductase] + H2O + H(+). The catalysed reaction is (5Z,8Z,11Z,14Z)-eicosatetraenoate + reduced [NADPH--hemoprotein reductase] + O2 = 17-hydroxy-(5Z,8Z,11Z,14Z)-eicosatetraenoate + oxidized [NADPH--hemoprotein reductase] + H2O + H(+). The enzyme catalyses (5Z,8Z,11Z,14Z)-eicosatetraenoate + reduced [NADPH--hemoprotein reductase] + O2 = 18-hydroxy-(5Z,8Z,11Z,14Z)-eicosatetraenoate + oxidized [NADPH--hemoprotein reductase] + H2O + H(+). It catalyses the reaction (5Z,8Z,11Z,14Z)-eicosatetraenoate + reduced [NADPH--hemoprotein reductase] + O2 = 19-hydroxy-(5Z,8Z,11Z,14Z)-eicosatetraenoate + oxidized [NADPH--hemoprotein reductase] + H2O + H(+). It carries out the reaction (5Z,8Z,11Z,14Z,17Z)-eicosapentaenoate + reduced [NADPH--hemoprotein reductase] + O2 = 19-hydroxy-(5Z,8Z,11Z,14Z,17Z)-eicosapentaenoate + oxidized [NADPH--hemoprotein reductase] + H2O + H(+). The catalysed reaction is (5Z,8Z,11Z,14Z)-eicosatetraenoate + reduced [NADPH--hemoprotein reductase] + O2 = (8R,9S)-epoxy-(5Z,11Z,14Z)-eicosatrienoate + oxidized [NADPH--hemoprotein reductase] + H2O + H(+). The enzyme catalyses (5Z,8Z,11Z,14Z)-eicosatetraenoate + reduced [NADPH--hemoprotein reductase] + O2 = (11R,12S)-epoxy-(5Z,8Z,14Z)-eicosatrienoate + oxidized [NADPH--hemoprotein reductase] + H2O + H(+). It catalyses the reaction (5Z,8Z,11Z,14Z)-eicosatetraenoate + reduced [NADPH--hemoprotein reductase] + O2 = (14S,15R)-epoxy-(5Z,8Z,11Z)-eicosatrienoate + oxidized [NADPH--hemoprotein reductase] + H2O + H(+). It carries out the reaction (5Z,8Z,11Z,14Z)-eicosatetraenoate + reduced [NADPH--hemoprotein reductase] + O2 = (14R,15S)-epoxy-(5Z,8Z,11Z)-eicosatrienoate + oxidized [NADPH--hemoprotein reductase] + H2O + H(+). The catalysed reaction is (5Z,8Z,11Z,14Z,17Z)-eicosapentaenoate + reduced [NADPH--hemoprotein reductase] + O2 = (17R,18S)-epoxy-(5Z,8Z,11Z,14Z)-eicosatetraenoate + oxidized [NADPH--hemoprotein reductase] + H2O + H(+). The enzyme catalyses (4Z,7Z,10Z,13Z,16Z,19Z)-docosahexaenoate + reduced [NADPH--hemoprotein reductase] + O2 = (19S,20R)-epoxy-(4Z,7Z,10Z,13Z,16Z)-docosapentaenoate + oxidized [NADPH--hemoprotein reductase] + H2O + H(+). It catalyses the reaction (4Z,7Z,10Z,13Z,16Z,19Z)-docosahexaenoate + reduced [NADPH--hemoprotein reductase] + O2 = (19R,20S)-epoxy-(4Z,7Z,10Z,13Z,16Z)-docosapentaenoate + oxidized [NADPH--hemoprotein reductase] + H2O + H(+). It carries out the reaction all-trans-retinol + reduced [NADPH--hemoprotein reductase] + O2 = all-trans-retinal + oxidized [NADPH--hemoprotein reductase] + 2 H2O + H(+). The catalysed reaction is all-trans-retinal + reduced [NADPH--hemoprotein reductase] + O2 = all-trans-retinoate + oxidized [NADPH--hemoprotein reductase] + H2O + 2 H(+). The enzyme catalyses (13S)-hydroperoxy-(9Z,11E)-octadecadienoate = 13-oxo-(9Z,11E)-octadecadienoate + H2O. It catalyses the reaction (12S)-hydroperoxy-(5Z,8Z,10E,14Z)-eicosatetraenoate = 12-oxo-(5Z,8Z,10E,14Z)-eicosatetraenoate + H2O. It carries out the reaction (15S)-hydroperoxy-(5Z,8Z,11Z,13E)-eicosatetraenoate = 15-oxo-(5Z,8Z,11Z,13E)-eicosatetraenoate + H2O. The catalysed reaction is (5S)-hydroperoxy-(6E,8Z,11Z,14Z)-eicosatetraenoate = 5-oxo-(6E,8Z,11Z,14Z)-eicosatetraenoate + H2O. The protein operates within steroid hormone biosynthesis. It participates in lipid metabolism; fatty acid metabolism. Its pathway is cofactor metabolism; retinol metabolism. Functionally, a cytochrome P450 monooxygenase involved in the metabolism of various endogenous substrates, including fatty acids, steroid hormones and vitamins. Mechanistically, uses molecular oxygen inserting one oxygen atom into a substrate, and reducing the second into a water molecule, with two electrons provided by NADPH via cytochrome P450 reductase (CPR; NADPH-ferrihemoprotein reductase). Catalyzes the hydroxylation of carbon-hydrogen bonds. Exhibits high catalytic activity for the formation of hydroxyestrogens from estrone (E1) and 17beta-estradiol (E2), namely 2-hydroxy E1 and E2, as well as D-ring hydroxylated E1 and E2 at the C15alpha and C16alpha positions. Displays different regioselectivities for polyunsaturated fatty acids (PUFA) hydroxylation. Catalyzes the epoxidation of double bonds of certain PUFA. Converts arachidonic acid toward epoxyeicosatrienoic acid (EET) regioisomers, 8,9-, 11,12-, and 14,15-EET, that function as lipid mediators in the vascular system. Displays an absolute stereoselectivity in the epoxidation of eicosapentaenoic acid (EPA) producing the 17(R),18(S) enantiomer. May play an important role in all-trans retinoic acid biosynthesis in extrahepatic tissues. Catalyzes two successive oxidative transformation of all-trans retinol to all-trans retinal and then to the active form all-trans retinoic acid. May also participate in eicosanoids metabolism by converting hydroperoxide species into oxo metabolites (lipoxygenase-like reaction, NADPH-independent). This is Cytochrome P450 1A1 (CYP1A1) from Cavia porcellus (Guinea pig).